A 484-amino-acid chain; its full sequence is Catalase (484 aa).

Methionine 53 bears the Methionine sulfone mark. Catalysis depends on residues histidine 54 and asparagine 127. A heme-binding site is contributed by tyrosine 337.

In terms of assembly, homotetramer. The cofactor is heme. Requires NADP(+) as cofactor.

It localises to the cytoplasm. The enzyme catalyses 2 H2O2 = O2 + 2 H2O. Functionally, decomposes hydrogen peroxide into water and oxygen; serves to protect cells from the toxic effects of hydrogen peroxide. The polypeptide is Catalase (katA) (Proteus mirabilis).